The sequence spans 4763 residues: Nonribosomal peptide synthetase sidC (4763 aa).

Positions 1 to 24 (MAGTANPADEGLTGPTETTNHINS) are disordered. Positions 15–24 (PTETTNHINS) are enriched in polar residues. Positions 296–815 (STVAEHSTLT…SSGKVDRNSI (520 aa)) are adenylation 1. Residues 853-930 (EKALELRTLV…GLLTLILNGK (78 aa)) form the Carrier 1 domain. Position 890 is an O-(pantetheine 4'-phosphoryl)serine (Ser-890). The segment at 1003–1396 (TRSYIYHSVI…DIIAFILQNP (394 aa)) is condensation 1. Residues 1398–1951 (GDFENALLYT…AKTDRRALQA (554 aa)) are adenylation 2. The Carrier 2 domain maps to 1979 to 2055 (LVASDAMEKI…DLARLCTSSS (77 aa)). Ser-2016 is subject to O-(pantetheine 4'-phosphoryl)serine. The condensation 2 stretch occupies residues 2092–2423 (TPIQESLLSE…HIHAREVRRM (332 aa)). An adenylation 3 region spans residues 2556 to 3070 (ELNAREHPEW…MSGKANIKEL (515 aa)). The Carrier 3 domain occupies 3099 to 3175 (RPLSSDEEAV…QLAQLPRKST (77 aa)). Ser-3136 carries the post-translational modification O-(pantetheine 4'-phosphoryl)serine. The interval 3217 to 3626 (PLQEGLVARS…DDIALDSFSL (410 aa)) is condensation 3. A Carrier 4 domain is found at 3647–3720 (SATETKIRDL…ALAEHVDERS (74 aa)). At Ser-3681 the chain carries O-(pantetheine 4'-phosphoryl)serine. Positions 3761–4093 (TPLQAGMITR…SLFDTLFVFQ (333 aa)) are condensation 4. A Carrier 5 domain is found at 4204-4277 (PAHESIIRDV…GISARIISPV (74 aa)). Ser-4238 carries the post-translational modification O-(pantetheine 4'-phosphoryl)serine. The segment at 4344–4593 (ERIDSGKLEE…PCLNVTPFTF (250 aa)) is condensation 5.

Belongs to the NRP synthetase family.

It functions in the pathway siderophore biosynthesis. In terms of biological role, nonribosomal peptide synthase; part of the siderophore biosynthetic pathway. Aspergillus fumigatus produces four types of siderophores, low-molecular-mass iron chelators, including excreted fusarinine C (FsC) and triacetylfusarinine C (TAFC) for iron uptake; and intacellular ferricrocin (FC) for hyphal and hydroxyferricrocin (HFC) for conidial iron distribution and storage. TAFC consists of three N(2)-acetyl-N(5)-anhydromevalonyl-N(5)-hydroxyornithine residues cyclically linked by ester bonds; FC is a cyclic hexapeptide with the structure Gly-Ser-Gly-(N(5)-acetyl-N(5)-hydroxyornithine)x3. The biosynthesis of all four siderophores depends on the hydroxylation of ornithine, catalyzed by the monooxygenase sidA. Subsequently, the pathways for biosynthesis of extra- and intracellular siderophores split. For biosynthesis of extracellular siderophores, the transacylase sidF transfers anhydromevalonyl to N(5)-hydroxyornithine. The required anhydromevalonyl-CoA moiety is derived from mevalonate by CoA ligation and dehydration catalyzed by sidI and sidH respectively. The acetylation of N(5)-hydroxyornithine for FC biosynthesis involves the constitutively expressed sidL. FC is hydroxylated to HFC by an as yet uncharacterized enzyme during conidiation. Assembly of fusarinine C (FsC) and FC is catalyzed by two different nonribosomal peptide synthetases (NRPS), sidD and sidC respectively. Subsequently, sidG catalyzes N2-acetylation of FsC for forming TAFC. Both extra- and intracellular siderophores are crucial for growth during iron limitation and virulence. The protein is Nonribosomal peptide synthetase sidC of Aspergillus fumigatus (strain ATCC MYA-4609 / CBS 101355 / FGSC A1100 / Af293) (Neosartorya fumigata).